Here is a 329-residue protein sequence, read N- to C-terminus: Synaptonemal complex central element protein 1 (329 aa).

The segment at 1–33 (MATRPQPLSVEPEGSADLLHGPEGARGRRGSTQ) is disordered. Coiled coils occupy residues 28–168 (RRGS…ETLM) and 194–294 (KEQL…ILAQ). The segment at 295 to 329 (IQSTQKEEDSSWRTASPKPLEAHKETVQERPSSRT) is disordered. Basic and acidic residues predominate over residues 314-329 (LEAHKETVQERPSSRT).

Belongs to the SYCE family. In terms of assembly, homodimer. Found in a complex with SYCP1 and SYCE2. Interacts with SYCP1, SYCE2 and SYCE3. Interacts with SIX6OS1.

It is found in the nucleus. The protein localises to the chromosome. Major component of the transverse central element of synaptonemal complexes (SCS), formed between homologous chromosomes during meiotic prophase. Requires SYCP1 in order to be incorporated into the central element. May have a role in the synaptonemal complex assembly, stabilization and recombination. In Rattus norvegicus (Rat), this protein is Synaptonemal complex central element protein 1 (Syce1).